Consider the following 252-residue polypeptide: Triosephosphate isomerase (252 aa).

Residue 9–11 (NWK) participates in substrate binding. His96 (electrophile) is an active-site residue. The active-site Proton acceptor is Glu166. Substrate is bound by residues Gly172, Ser212, and 233–234 (GG).

Belongs to the triosephosphate isomerase family. In terms of assembly, homodimer.

It localises to the cytoplasm. The enzyme catalyses D-glyceraldehyde 3-phosphate = dihydroxyacetone phosphate. It functions in the pathway carbohydrate biosynthesis; gluconeogenesis. It participates in carbohydrate degradation; glycolysis; D-glyceraldehyde 3-phosphate from glycerone phosphate: step 1/1. In terms of biological role, involved in the gluconeogenesis. Catalyzes stereospecifically the conversion of dihydroxyacetone phosphate (DHAP) to D-glyceraldehyde-3-phosphate (G3P). The sequence is that of Triosephosphate isomerase from Chlorobium chlorochromatii (strain CaD3).